The primary structure comprises 507 residues: ATP synthase subunit alpha, chloroplastic (507 aa).

170-177 serves as a coordination point for ATP; sequence GDRQTGKT.

It belongs to the ATPase alpha/beta chains family. In terms of assembly, F-type ATPases have 2 components, CF(1) - the catalytic core - and CF(0) - the membrane proton channel. CF(1) has five subunits: alpha(3), beta(3), gamma(1), delta(1), epsilon(1). CF(0) has four main subunits: a, b, b' and c.

The protein resides in the plastid. It localises to the chloroplast thylakoid membrane. The enzyme catalyses ATP + H2O + 4 H(+)(in) = ADP + phosphate + 5 H(+)(out). In terms of biological role, produces ATP from ADP in the presence of a proton gradient across the membrane. The alpha chain is a regulatory subunit. This chain is ATP synthase subunit alpha, chloroplastic, found in Spinacia oleracea (Spinach).